Consider the following 129-residue polypeptide: Virion-associated protein (129 aa).

Coiled coils occupy residues 1–31 (MANL…ILEL) and 38–59 (IKES…LIND). Positions 122-129 (PAGWPNQY) are capsid binding.

This sequence belongs to the caulimovirus ORF III family. Homotetramer, through coiled-coil domain. Homotrimer when interacts with icosehadral capsid. Interacts with capsid protein, and with Movement protein.

It is found in the virion. Its subcellular location is the host cell junction. The protein resides in the host plasmodesma. In terms of biological role, plays a role in virus cell-to-cell and plant-to-plant transmission. Interacts with virion icosahedral capsid and movement protein, thereby facilitating virion cell-to-cell transmission through plasmodesmata opened by viral movement protein. Also interacts with aphid transmission factor, attaching the virion to aphid stylet when the animal feeds on an virus infected plant. Aphid saliva may later detach the virion, inducing release of infectious particles when the animal feeds on a new plant. This chain is Virion-associated protein, found in Cauliflower mosaic virus (strain D/H) (CaMV).